A 638-amino-acid chain; its full sequence is Zinc finger protein 143 (638 aa).

At Met1 the chain carries N-acetylmethionine. Residue Lys213 forms a Glycyl lysine isopeptide (Lys-Gly) (interchain with G-Cter in SUMO2) linkage. 4 C2H2-type zinc fingers span residues 237 to 261 (FRCKYDGCGKLYTTAHHLKVHERSH), 267 to 291 (YQCEHSGCGKAFATGYGLKSHFRTH), 297 to 321 (YRCSEDNCTKSFKTSGDLQKHIRTH), and 327 to 351 (FKCPIEGCGRSFTTSNIRKVHIRTH). The residue at position 352 (Thr352) is a Phosphothreonine. 3 C2H2-type zinc fingers span residues 357 to 381 (YYCTEPGCGRAFASATNYKNHVRIH), 387 to 411 (YVCTVPGCDKRFTEYSSLYKHHVVH), and 417 to 440 (YNCNHCGKTYKQISTLAMHKRTAH). Lys406 participates in a covalent cross-link: Glycyl lysine isopeptide (Lys-Gly) (interchain with G-Cter in SUMO2).

This sequence belongs to the GLI C2H2-type zinc-finger protein family. In terms of assembly, interacts with CHD8. Forms a complex with HCFC1 and ZNF143.

It is found in the nucleus. Functionally, transcriptional activator. Activates the gene for selenocysteine tRNA (tRNAsec). Binds to the SPH motif of small nuclear RNA (snRNA) gene promoters. Participates in efficient U6 RNA polymerase III transcription via its interaction with CHD8. In complex with HCFC1 and ZNF143, regulates the expression of several genes, including AP2S1, ESCO2, OPHN1, RBL1, UBXN8 and ZNF32. The protein is Zinc finger protein 143 (Znf143) of Mus musculus (Mouse).